Consider the following 159-residue polypeptide: Phosphopantetheine adenylyltransferase (159 aa).

T9 provides a ligand contact to substrate. ATP-binding positions include 9-10 (TF) and H17. Substrate contacts are provided by K41, L73, and R87. ATP contacts are provided by residues 88-90 (GLR), E98, and 123-129 (YSFISST).

The protein belongs to the bacterial CoaD family. Homohexamer. It depends on Mg(2+) as a cofactor.

The protein resides in the cytoplasm. The catalysed reaction is (R)-4'-phosphopantetheine + ATP + H(+) = 3'-dephospho-CoA + diphosphate. It participates in cofactor biosynthesis; coenzyme A biosynthesis; CoA from (R)-pantothenate: step 4/5. Its function is as follows. Reversibly transfers an adenylyl group from ATP to 4'-phosphopantetheine, yielding dephospho-CoA (dPCoA) and pyrophosphate. The chain is Phosphopantetheine adenylyltransferase from Pseudomonas fluorescens (strain ATCC BAA-477 / NRRL B-23932 / Pf-5).